The following is a 249-amino-acid chain: Probable hydroxyacylglutathione hydrolase ECU02_0580 (249 aa).

Zn(2+) is bound by residues His75, His77, Asp79, His80, His126, Asp144, and His183. Residues His183 to Tyr185 and Arg240 to Lys243 contribute to the substrate site.

This sequence belongs to the metallo-beta-lactamase superfamily. Glyoxalase II family. The cofactor is Zn(2+).

It is found in the cytoplasm. Its subcellular location is the nucleus. The catalysed reaction is an S-(2-hydroxyacyl)glutathione + H2O = a 2-hydroxy carboxylate + glutathione + H(+). The protein operates within secondary metabolite metabolism; methylglyoxal degradation; (R)-lactate from methylglyoxal: step 2/2. Its function is as follows. Thiolesterase that catalyzes the hydrolysis of S-D-lactoyl-glutathione to form glutathione and D-lactic acid. This Encephalitozoon cuniculi (strain GB-M1) (Microsporidian parasite) protein is Probable hydroxyacylglutathione hydrolase ECU02_0580.